The sequence spans 302 residues: Pseudouridine-5'-phosphate glycosidase (302 aa).

The active-site Proton donor is the glutamate 25. Residues lysine 86 and valine 106 each contribute to the substrate site. Aspartate 138 is a Mn(2+) binding site. 140-142 (SAD) contributes to the substrate binding site. Lysine 159 (nucleophile) is an active-site residue.

This sequence belongs to the pseudouridine-5'-phosphate glycosidase family. As to quaternary structure, homotrimer. Requires Mn(2+) as cofactor.

It catalyses the reaction D-ribose 5-phosphate + uracil = psi-UMP + H2O. Its function is as follows. Catalyzes the reversible cleavage of pseudouridine 5'-phosphate (PsiMP) to ribose 5-phosphate and uracil. Functions biologically in the cleavage direction, as part of a pseudouridine degradation pathway. This Glaesserella parasuis serovar 5 (strain SH0165) (Haemophilus parasuis) protein is Pseudouridine-5'-phosphate glycosidase.